The following is a 353-amino-acid chain: Photosystem II protein D1 (353 aa).

Position 2 is an N-acetylthreonine (T2). T2 carries the post-translational modification Phosphothreonine. The next 3 membrane-spanning stretches (helical) occupy residues 29–46, 118–133, and 142–156; these read YIGWFGVLMIPTLLTATS, HFLLGVACYMGREWEL, and WIAVAYSAPVAAAAA. H118 contributes to the chlorophyll a binding site. Residue Y126 participates in pheophytin a binding. The [CaMn4O5] cluster site is built by D170 and E189. The chain crosses the membrane as a helical span at residues 197-218; that stretch reads FHMLGVAGVFGGSLFSAMHGSL. Residue H198 participates in chlorophyll a binding. Residues H215 and 264–265 contribute to the a quinone site; that span reads SF. Fe cation is bound at residue H215. Position 272 (H272) interacts with Fe cation. A helical membrane pass occupies residues 274-288; it reads FLAAWPVVGIWFTAL. H332, E333, D342, and A344 together coordinate [CaMn4O5] cluster. A propeptide spanning residues 345 to 353 is cleaved from the precursor; it reads AVEAPSTNG.

This sequence belongs to the reaction center PufL/M/PsbA/D family. In terms of assembly, PSII is composed of 1 copy each of membrane proteins PsbA, PsbB, PsbC, PsbD, PsbE, PsbF, PsbH, PsbI, PsbJ, PsbK, PsbL, PsbM, PsbT, PsbX, PsbY, PsbZ, Psb30/Ycf12, at least 3 peripheral proteins of the oxygen-evolving complex and a large number of cofactors. It forms dimeric complexes. The D1/D2 heterodimer binds P680, chlorophylls that are the primary electron donor of PSII, and subsequent electron acceptors. It shares a non-heme iron and each subunit binds pheophytin, quinone, additional chlorophylls, carotenoids and lipids. D1 provides most of the ligands for the Mn4-Ca-O5 cluster of the oxygen-evolving complex (OEC). There is also a Cl(-1) ion associated with D1 and D2, which is required for oxygen evolution. The PSII complex binds additional chlorophylls, carotenoids and specific lipids. is required as a cofactor. In terms of processing, tyr-161 forms a radical intermediate that is referred to as redox-active TyrZ, YZ or Y-Z. Post-translationally, C-terminally processed by CTPA; processing is essential to allow assembly of the oxygen-evolving complex and thus photosynthetic growth.

Its subcellular location is the plastid. It is found in the chloroplast thylakoid membrane. It carries out the reaction 2 a plastoquinone + 4 hnu + 2 H2O = 2 a plastoquinol + O2. Its function is as follows. Photosystem II (PSII) is a light-driven water:plastoquinone oxidoreductase that uses light energy to abstract electrons from H(2)O, generating O(2) and a proton gradient subsequently used for ATP formation. It consists of a core antenna complex that captures photons, and an electron transfer chain that converts photonic excitation into a charge separation. The D1/D2 (PsbA/PsbD) reaction center heterodimer binds P680, the primary electron donor of PSII as well as several subsequent electron acceptors. The protein is Photosystem II protein D1 of Nandina domestica (Heavenly bamboo).